The chain runs to 1335 residues: Regulatory-associated protein of mTOR (1335 aa).

Phosphoserine occurs at positions 44 and 122. S696 carries the phosphoserine; by MAPK8 modification. Residue T700 is glycosylated (O-linked (GlcNAc) threonine). The residue at position 706 (T706) is a Phosphothreonine; by MAPK8. S719 and S721 each carry phosphoserine; by RPS6KA1. Residue S722 is modified to Phosphoserine; by AMPK and RPS6KA1. S738 carries the post-translational modification Phosphoserine. A disordered region spans residues 749–771 (GSSVAFSPGNLSTSSSASSTLGS). Over residues 755–771 (SPGNLSTSSSASSTLGS) the composition is skewed to low complexity. The residue at position 791 (S791) is a Phosphoserine. S792 is modified (phosphoserine; by AMPK). Phosphoserine occurs at positions 836 and 855. Over residues 853–866 (TSSLTQSAPASPTN) the composition is skewed to polar residues. Positions 853-942 (TSSLTQSAPA…GPDQTTDDAD (90 aa)) are disordered. Position 859 is a phosphoserine; by MTOR (S859). Position 863 is a phosphoserine; by MAPK8, MTOR and NLK (S863). Residue T865 is modified to Phosphothreonine. S877 is subject to Phosphoserine. Residues 877-887 (SPPASSTSSCS) are compositionally biased toward low complexity. Residues 888–898 (LTNDVAKQTVS) show a composition bias toward polar residues. Glycyl lysine isopeptide (Lys-Gly) (interchain with G-Cter in ubiquitin) cross-links involve residues K932 and K948. S982 is subject to Phosphoserine. 7 WD repeats span residues 1020-1061 (NRNP…DYFH), 1065-1106 (PRYT…EKNP), 1121-1160 (TTRG…KVQD), 1164-1203 (GADS…SECR), 1209-1249 (EHTA…SVNV), 1251-1291 (QIVK…NNIK), and 1299-1335 (QRVG…KRVR). K1097 is modified (N6-acetyllysine).

It belongs to the WD repeat RAPTOR family. As to quaternary structure, part of the mechanistic target of rapamycin complex 1 (mTORC1) which contains MTOR, MLST8 and RPTOR. mTORC1 associates with AKT1S1/PRAS40, which inhibits its activity. mTORC1 associates with DEPTOR, which regulates its activity. mTORC1 binds to and is inhibited by FKBP12-rapamycin. Forms a complex with MTOR under both leucine-rich and -poor conditions. Interacts with (via TOS motifs) EIF4EBP1 and RPS6KB1; interaction is independent of its association with MTOR. Binds preferentially to poorly or non-phosphorylated forms of EIF4EBP1, and this binding is critical to the ability of MTOR to catalyze phosphorylation. Interacts with ULK1 in a nutrient-dependent manner; the interaction is reduced during starvation. Interacts with GTP-bound form of RagA/RRAGA or RagB/RRAGB and GDP-bound form of RagC/RRAGC or RagD/RRAGD, promoting recruitment of mTORC1 to the lysosomes. Interacts (when phosphorylated by AMPK) with 14-3-3 protein, leading to inhibition of its activity. Interacts with SPAG5; SPAG5 competes with MTOR for RPTOR-binding, resulting in decreased mTORC1 formation. Interacts with WAC; WAC positively regulates MTOR activity by promoting the assembly of the TTT complex composed of TELO2, TTI1 and TTI2 and the RUVBL complex composed of RUVBL1 and RUVBL2 into the TTT-RUVBL complex which leads to the dimerization of the mTORC1 complex and its subsequent activation. Interacts with G3BP1. The complex formed with G3BP1 and SPAG5 is increased by oxidative stress. Interacts with HTR6. Interacts with PIH1D1. Interacts with LARP1. Interacts with BRAT1. Interacts with SIK3. Interacts with SLC38A7; this interaction mediates the recruitment of mTORC1 to the lysosome and its subsequent activation. In terms of processing, insulin-stimulated phosphorylation at Ser-863 by MTOR and MAPK8 regulates mTORC1 activity. Phosphorylated at Ser-863 by NLK in response to stress, disrupting the interaction with small GTPases Rag (RagA/RRAGA, RagB/RRAGB, RagC/RRAGC and/or RagD/RRAGD), thereby preventing lysosome recruitment and activation of the mTORC1 complex. Osmotic stress also induces phosphorylation at Ser-696, Thr-706 and Ser-863 by MAPK8. Ser-863 phosphorylation is required for phosphorylation at Ser-855 and Ser-859. In response to nutrient limitation, phosphorylated at Ser-722 and Ser-792 by AMPK; phosphorylation promotes interaction with 14-3-3 proteins, leading to negative regulation of the mTORC1 complex. Phosphorylation at Ser-722 and Ser-792 by AMPK in response to glucose starvation inhibits O-GlcNAcylation by OGT and subsequent activation of mTORC1. In response to growth factors, phosphorylated at Ser-719, Ser-721 and Ser-722 by RPS6KA1, which stimulates mTORC1 activity. Phosphorylation at Ser-791 by PKA downstream of cAMP inhibits the mTORC1 complex. Phosphorylated at Ser-877 by TBK1, leading to negative regulation of the mTORC1 complex. Post-translationally, O-GlcNAcylated by OGT upon glucose sufficiency, promoting interaction with small GTPases Rag (RagA/RRAGA, RagB/RRAGB, RagC/RRAGC and/or RagD/RRAGD) and subsequent recruitment of mTORC1 to lysosomal membranes, leading to activation of the mTORC1 complex. Phosphorylation at Ser-722 and Ser-792 by AMPK in response to glucose starvation inhibits O-GlcNAcylation. Acetylation at Lys-1097 by EP300/p300 in response to leucine metabolite acetyl-coA promotes its activity, leading to activation of the mTORC1 complex. Acetylation is decreased in response to fasting. Phosphorylated at Ser-877 by TBK1, leading to negative regulation of the mTORC1 complex. In terms of processing, ubiquitinated, leading to its degradation by the proteasome. Deubiquitinated by OTUB1 via a non-catalytic mechanism. Ubiquitinated by an E3 ubiquitin ligase complex containing VHL.

The protein localises to the cytoplasm. The protein resides in the lysosome. Its subcellular location is the cytoplasmic granule. Functionally, component of the mechanistic target of rapamycin complex 1 (mTORC1), an evolutionarily conserved central nutrient sensor that stimulates anabolic reactions and macromolecule biosynthesis to promote cellular biomass generation and growth. In response to nutrients, growth factors or amino acids, mTORC1 is recruited to the lysosome membrane and promotes protein, lipid and nucleotide synthesis by phosphorylating several substrates, such as ribosomal protein S6 kinase (RPS6KB1 and RPS6KB2) and EIF4EBP1 (4E-BP1). In the same time, it inhibits catabolic pathways by phosphorylating the autophagy initiation components ULK1 and ATG13, as well as transcription factor TFEB, a master regulators of lysosomal biogenesis and autophagy. The mTORC1 complex is inhibited in response to starvation and amino acid depletion. Within the mTORC1 complex, RPTOR acts both as a molecular adapter, which (1) mediates recruitment of mTORC1 to lysosomal membranes via interaction with small GTPases Rag (RagA/RRAGA, RagB/RRAGB, RagC/RRAGC and/or RagD/RRAGD), and a (2) substrate-specific adapter, which promotes substrate specificity by binding to TOS motif-containing proteins and direct them towards the active site of the MTOR kinase domain for phosphorylation. mTORC1 complex regulates many cellular processes, such as odontoblast and osteoclast differentiation or neuronal transmission. mTORC1 complex in excitatory neuronal transmission is required for the prosocial behavior induced by the psychoactive substance lysergic acid diethylamide (LSD). In Mus musculus (Mouse), this protein is Regulatory-associated protein of mTOR.